A 4246-amino-acid chain; its full sequence is Intermembrane lipid transfer protein vps13F (4246 aa).

Residues 2–113 (FESIVSNLLT…LLLQKKLKKL (112 aa)) enclose the Chorein N-terminal domain. Disordered regions lie at residues 141 to 271 (IKEK…EDED), 401 to 420 (PKKS…PPPK), 591 to 759 (KAED…SILG), 914 to 944 (VSSS…EKKL), 964 to 1014 (KKSK…TNDE), 1217 to 1251 (QAQQ…IKSP), 1356 to 1379 (ISTH…DRVD), 1395 to 1436 (YNGV…KSKK), 1622 to 1683 (REKR…KSQS), 2101 to 2131 (LESL…QQQQ), 2211 to 2237 (HHSK…EKEK), 2471 to 2513 (QQQH…KSKQ), 2704 to 2756 (LSTS…QTTK), 3421 to 3449 (IDDD…TSPL), 3611 to 3652 (KTLN…NNQN), and 3794 to 3813 (NNNN…NIDE). Low complexity predominate over residues 168–201 (NASPVNSNNNNNNNSNLVSESNIPSSSSSSSSSL). The segment covering 207 to 217 (NSSKDANKSDD) has biased composition (basic and acidic residues). A compositionally biased stretch (acidic residues) spans 218-271 (TDMDVDDDDEFQEATEGDYDNEEEQDDHDEEDDLSDDDDDDDDEEDDYEMEDED). Low complexity-rich tracts occupy residues 401–413 (PKKS…TTTP) and 597–658 (QQQQ…SNST). Over residues 659 to 668 (DSKDIMKSSG) the composition is skewed to basic and acidic residues. Residues 669 to 680 (DKNVNNNNNMGD) are compositionally biased toward low complexity. Residues 681-702 (NENKDNIDKKEENKNDDQDNKN) show a composition bias toward basic and acidic residues. 2 stretches are compositionally biased toward low complexity: residues 725–747 (SGGW…QQQQ) and 914–924 (VSSSPSPVSSP). 2 stretches are compositionally biased toward basic and acidic residues: residues 925 to 944 (SRDK…EKKL) and 987 to 1001 (DKYS…REES). Residues 1217-1241 (QAQQQAQQQQQSQHPSSNDDNSSSN) are compositionally biased toward low complexity. Residues 1400-1409 (SDDDNNDDEN) are compositionally biased toward acidic residues. Composition is skewed to basic and acidic residues over residues 1410 to 1431 (DKTT…DSLK) and 1622 to 1634 (REKR…DKDN). Residues 1644–1670 (QQSIPQKQQQQQQQQQQQQQQQQQQQQ) show a composition bias toward low complexity. Low complexity-rich tracts occupy residues 2471 to 2506 (QQQH…NNNN), 2705 to 2755 (STST…TQTT), 3430 to 3449 (DSGS…TSPL), 3613 to 3652 (LNNN…NNQN), and 3794 to 3809 (NNNN…NDFN).

The protein belongs to the VPS13 family.

Its subcellular location is the membrane. Functionally, mediates the transfer of lipids between membranes at organelle contact sites. This is Intermembrane lipid transfer protein vps13F (vps13F) from Dictyostelium discoideum (Social amoeba).